We begin with the raw amino-acid sequence, 147 residues long: UPF0178 protein Tgr7_2584 (147 aa).

It belongs to the UPF0178 family.

This chain is UPF0178 protein Tgr7_2584, found in Thioalkalivibrio sulfidiphilus (strain HL-EbGR7).